The sequence spans 787 residues: PAN2-PAN3 deadenylation complex subunit pan3 (787 aa).

A disordered region spans residues 1 to 20 (MNSGLTPSPSPAVAAAGPAG). The segment covering 11 to 20 (PAVAAAGPAG) has biased composition (low complexity). A C3H1-type zinc finger spans residues 23-51 (GSKLKFCRYYAKDRTCFYGDECQFLHDDQ). Disordered regions lie at residues 131-162 (EATY…AAHD), 179-210 (TMSQ…MSQS), and 226-291 (GGPT…PPST). Composition is skewed to low complexity over residues 143–154 (NSSSSPSLLNDS) and 200–210 (STSRLSNMSQS). The PABPC-interacting motif-2 (PAM-2) motif lies at 185-200 (KTPNPTASEFIPKGGS). Residues 265 to 290 (TPNPANYMVPTSASTPVTNSVSQPPS) show a composition bias toward polar residues. The tract at residues 365–650 (QIDQADMPGV…SVNDIMPMIG (286 aa)) is pseudokinase domain. ATP contacts are provided by residues R422, 471-478 (DFHAGSET), and 545-546 (TK). Residues 651–689 (ARFYTQLDAAQMRNDVIEEDLAKEVQNGRLFRLLAKLGT) adopt a coiled-coil conformation. A knob domain region spans residues 690 to 787 (INERPEFQKD…ELVAAANGQL (98 aa)).

It belongs to the protein kinase superfamily. PAN3 family. In terms of assembly, homodimer. Forms a heterotrimer with a catalytic subunit pan2 to form the poly(A)-nuclease (PAN) deadenylation complex. Interacts (via PAM-2 motif) with poly(A)-binding protein pabpc1 (via PABC domain), conferring substrate specificity of the enzyme complex. Interacts with the GW182 family proteins tnrc6a, tnrc6b and tnrc6c.

Its subcellular location is the cytoplasm. The protein resides in the P-body. Regulatory subunit of the poly(A)-nuclease (PAN) deadenylation complex, one of two cytoplasmic mRNA deadenylases involved in general and miRNA-mediated mRNA turnover. PAN specifically shortens poly(A) tails of RNA and the activity is stimulated by poly(A)-binding protein (PABP). PAN deadenylation is followed by rapid degradation of the shortened mRNA tails by the CCR4-NOT complex. Deadenylated mRNAs are then degraded by two alternative mechanisms, namely exosome-mediated 3'-5' exonucleolytic degradation, or deadenylation-dependent mRNA decaping and subsequent 5'-3' exonucleolytic degradation by XRN1. PAN3 acts as a positive regulator for PAN activity, recruiting the catalytic subunit PAN2 to mRNA via its interaction with RNA and PABP, and to miRNA targets via its interaction with GW182 family proteins. This is PAN2-PAN3 deadenylation complex subunit pan3 from Xenopus tropicalis (Western clawed frog).